We begin with the raw amino-acid sequence, 266 residues long: MKLNERSLAFYATCDAPVDNAGFLYKRGGRGTGSHRRWFVLRGNILFYFEAEGSREPLGVILLEGCTVELVDAREEFAFAVRFAGGRSRPYVLAADSQAALEGWVKALSRASFHYLRLVVRELEQQLAAMREGSPANALPANPSPVLTQRPKENGWVVWSTLPEQPSVAPQRPPPLPPRRRASAANGPLASFAQLHARYGLEVQALRDQWRGGQAGLASLEVPWHPGSAETQTQDQPALRGHSGCKVLHVFRSVEWPVCNPGSQGT.

Residues 17 to 113 enclose the PH domain; the sequence is PVDNAGFLYK…WVKALSRASF (97 aa). Residues 165 to 184 are disordered; sequence QPSVAPQRPPPLPPRRRASA. Ser-183 is modified (phosphoserine). The short motif at 191–203 is the F&amp;H element; it reads SFAQLHARYGLEV.

It belongs to the sesquipedalian family. In terms of assembly, forms homodimers and heterodimers with PHETA2. Interacts with OCRL and INPP5B. Interaction with OCRL may be important for endosomal morphology and function.

The protein resides in the early endosome. It is found in the recycling endosome. It localises to the golgi apparatus. The protein localises to the trans-Golgi network. Its subcellular location is the cytoplasmic vesicle. The protein resides in the clathrin-coated vesicle. Plays a role in endocytic trafficking. Required for receptor recycling from endosomes, both to the trans-Golgi network and the plasma membrane. The polypeptide is Sesquipedalian-1 (Mus musculus (Mouse)).